The sequence spans 956 residues: DNA replication helicase (956 aa).

120 to 127 (GTAGAGKT) contacts ATP. The interval 658 to 694 (PINNHVDADSSQGGQSVPVSQRMEHGQEETHDIPCLS) is disordered. Residues 667-678 (SSQGGQSVPVSQ) show a composition bias toward low complexity. A compositionally biased stretch (basic and acidic residues) spans 679–694 (RMEHGQEETHDIPCLS).

Belongs to the herpesviridae helicase family. In terms of assembly, associates with the primase and the primase-associated factor to form the helicase-primase complex.

It localises to the host nucleus. Functionally, component of the helicase/primase complex. Unwinds the DNA at the replication forks and generates single-stranded DNA for both leading and lagging strand synthesis. The primase synthesizes short RNA primers on the lagging strand that the polymerase elongates using dNTPs. Possesses helicase-like motifs and therefore may act as the helicase subunit of the complex. The polypeptide is DNA replication helicase (Human cytomegalovirus (strain AD169) (HHV-5)).